The primary structure comprises 264 residues: uncharacterized protein (264 aa).

The tract at residues Glu-235 to Thr-264 is disordered. Residues Ser-237–Ile-247 are compositionally biased toward acidic residues.

This is an uncharacterized protein from Acanthamoeba polyphaga mimivirus (APMV).